A 116-amino-acid polypeptide reads, in one-letter code: Flagellar transcriptional regulator FlhD (116 aa).

This sequence belongs to the FlhD family. In terms of assembly, homodimer; disulfide-linked. Forms a heterohexamer composed of two FlhC and four FlhD subunits. Each FlhC binds a FlhD dimer, forming a heterotrimer, and a hexamer assembles by dimerization of two heterotrimers.

It localises to the cytoplasm. In terms of biological role, functions in complex with FlhC as a master transcriptional regulator that regulates transcription of several flagellar and non-flagellar operons by binding to their promoter region. Activates expression of class 2 flagellar genes, including fliA, which is a flagellum-specific sigma factor that turns on the class 3 genes. Also regulates genes whose products function in a variety of physiological pathways. In Pantoea ananatis (strain LMG 20103), this protein is Flagellar transcriptional regulator FlhD.